A 200-amino-acid polypeptide reads, in one-letter code: Recombination protein RecR (200 aa).

A C4-type zinc finger spans residues Cys59–Cys74. One can recognise a Toprim domain in the interval Ser82–Pro177.

Belongs to the RecR family.

In terms of biological role, may play a role in DNA repair. It seems to be involved in an RecBC-independent recombinational process of DNA repair. It may act with RecF and RecO. The polypeptide is Recombination protein RecR (Phenylobacterium zucineum (strain HLK1)).